We begin with the raw amino-acid sequence, 63 residues long: Large ribosomal subunit protein uL29 (63 aa).

It belongs to the universal ribosomal protein uL29 family.

This Christiangramia forsetii (strain DSM 17595 / CGMCC 1.15422 / KT0803) (Gramella forsetii) protein is Large ribosomal subunit protein uL29.